Here is a 139-residue protein sequence, read N- to C-terminus: MAMTYHLDVVSAEQQMFSGLVEKIQVTGSEGELGIYPGHAPLLTAIKPGMIRIVKQHGHEEFIYLSGGILEVQPGTVTVLADTAIRGQDLDEARALEAKRKAEEHIKSSHGDVDYAQASAELAKAIAKLRVIELTKKAM.

The protein belongs to the ATPase epsilon chain family. In terms of assembly, F-type ATPases have 2 components, CF(1) - the catalytic core - and CF(0) - the membrane proton channel. CF(1) has five subunits: alpha(3), beta(3), gamma(1), delta(1), epsilon(1). CF(0) has three main subunits: a, b and c.

The protein localises to the cell inner membrane. In terms of biological role, produces ATP from ADP in the presence of a proton gradient across the membrane. The chain is ATP synthase epsilon chain from Salmonella arizonae (strain ATCC BAA-731 / CDC346-86 / RSK2980).